The sequence spans 105 residues: MSAILKHSEERLMKVLLAPVISEKATFVAEKNEQVVFLVMPDATKPEIKAAVELLFKVQVESVQVANRQGKQKRSGRFNGRRNHTRRAFVCLKPGQEINFTEEAK.

Belongs to the universal ribosomal protein uL23 family. In terms of assembly, part of the 50S ribosomal subunit. Contacts protein L29, and trigger factor when it is bound to the ribosome.

Functionally, one of the early assembly proteins it binds 23S rRNA. One of the proteins that surrounds the polypeptide exit tunnel on the outside of the ribosome. Forms the main docking site for trigger factor binding to the ribosome. This is Large ribosomal subunit protein uL23 from Janthinobacterium sp. (strain Marseille) (Minibacterium massiliensis).